The sequence spans 317 residues: Beta-ketoacyl-[acyl-carrier-protein] synthase III (317 aa).

Active-site residues include Cys-112 and His-244. The tract at residues 245–249 (QANIR) is ACP-binding. Asn-274 is a catalytic residue.

It belongs to the thiolase-like superfamily. FabH family. In terms of assembly, homodimer.

The protein resides in the cytoplasm. The catalysed reaction is malonyl-[ACP] + acetyl-CoA + H(+) = 3-oxobutanoyl-[ACP] + CO2 + CoA. The protein operates within lipid metabolism; fatty acid biosynthesis. In terms of biological role, catalyzes the condensation reaction of fatty acid synthesis by the addition to an acyl acceptor of two carbons from malonyl-ACP. Catalyzes the first condensation reaction which initiates fatty acid synthesis and may therefore play a role in governing the total rate of fatty acid production. Possesses both acetoacetyl-ACP synthase and acetyl transacylase activities. Its substrate specificity determines the biosynthesis of branched-chain and/or straight-chain of fatty acids. The chain is Beta-ketoacyl-[acyl-carrier-protein] synthase III from Rickettsia akari (strain Hartford).